The sequence spans 157 residues: Dihydrofolate reductase type 5 (157 aa).

Residues K2–K156 enclose the DHFR domain.

Belongs to the dihydrofolate reductase family. In terms of assembly, homodimer.

It carries out the reaction (6S)-5,6,7,8-tetrahydrofolate + NADP(+) = 7,8-dihydrofolate + NADPH + H(+). It participates in cofactor biosynthesis; tetrahydrofolate biosynthesis; 5,6,7,8-tetrahydrofolate from 7,8-dihydrofolate: step 1/1. In terms of biological role, key enzyme in folate metabolism. Catalyzes an essential reaction for de novo glycine and purine synthesis, and for DNA precursor synthesis. In Escherichia coli, this protein is Dihydrofolate reductase type 5 (dhfrV).